The following is a 490-amino-acid chain: MTLWINGDWVTGQGALRVKRNPVSGEVLWQGNDADAAQVEQACRAARAAYPRWARLSFGDRQVRVERFAGLLESNKAELTAIIARETGKPRWEAATEVTAMINKIAISIKAYHVRTGEQRSEMPDGAASLRHRPHGVLAVFGPYNFPGHLPNGHIVPALLAGNTIIFKPSELTPWSGEAVMRLWQQAGLPPGVLNLVQGGRETGQALSALEDLDGLLFTGSANTGYQLHRQLSGQPEKILALEMGGNNPLIIDEVADIDAAVHLTIQSAFVTAGQRCTCARRLLLKSGAQGDAFLARLVAVSQRLTPGNWDDEPQPFIGGLISEQAAQQVVTAWQQLEAMGGRTLLAPRLFQAETSLLTPGIIEMTGVAGVPDEEVFGPLLRVWRCDTFDEAIRMANNTRFGLSCGLVSSEREKFDQLLLEARAGIVNWKKPLTGAASTAPFGGIGASGNHRPSAWYAADYCAWPMASLESDSLTLLAMLNPGLDFSDEV.

Residue 220 to 225 (GSANTG) participates in NAD(+) binding. Active-site residues include E243 and C277.

The protein belongs to the aldehyde dehydrogenase family. AstD subfamily.

The enzyme catalyses N-succinyl-L-glutamate 5-semialdehyde + NAD(+) + H2O = N-succinyl-L-glutamate + NADH + 2 H(+). The protein operates within amino-acid degradation; L-arginine degradation via AST pathway; L-glutamate and succinate from L-arginine: step 4/5. Catalyzes the NAD-dependent reduction of succinylglutamate semialdehyde into succinylglutamate. This is N-succinylglutamate 5-semialdehyde dehydrogenase from Shigella dysenteriae serotype 1 (strain Sd197).